Reading from the N-terminus, the 62-residue chain is Large ribosomal subunit protein uL30 (62 aa).

Belongs to the universal ribosomal protein uL30 family. As to quaternary structure, part of the 50S ribosomal subunit.

The polypeptide is Large ribosomal subunit protein uL30 (Shewanella frigidimarina (strain NCIMB 400)).